A 212-amino-acid polypeptide reads, in one-letter code: Pyridoxine/pyridoxamine 5'-phosphate oxidase 1 (212 aa).

Substrate contacts are provided by residues 8 to 11 and Lys66; that span reads RTDY. FMN is bound by residues 61–66, 76–77, Lys83, and Gln105; these read RIVLLK and FT. Tyr123, Arg127, and Ser131 together coordinate substrate. Residues 140 to 141 and Trp184 each bind FMN; that span reads QS. 190 to 192 provides a ligand contact to substrate; that stretch reads RLH. Arg194 lines the FMN pocket.

This sequence belongs to the pyridoxamine 5'-phosphate oxidase family. Homodimer. FMN serves as cofactor.

It carries out the reaction pyridoxamine 5'-phosphate + O2 + H2O = pyridoxal 5'-phosphate + H2O2 + NH4(+). The catalysed reaction is pyridoxine 5'-phosphate + O2 = pyridoxal 5'-phosphate + H2O2. It participates in cofactor metabolism; pyridoxal 5'-phosphate salvage; pyridoxal 5'-phosphate from pyridoxamine 5'-phosphate: step 1/1. It functions in the pathway cofactor metabolism; pyridoxal 5'-phosphate salvage; pyridoxal 5'-phosphate from pyridoxine 5'-phosphate: step 1/1. Functionally, catalyzes the oxidation of either pyridoxine 5'-phosphate (PNP) or pyridoxamine 5'-phosphate (PMP) into pyridoxal 5'-phosphate (PLP). This is Pyridoxine/pyridoxamine 5'-phosphate oxidase 1 from Ralstonia nicotianae (strain ATCC BAA-1114 / GMI1000) (Ralstonia solanacearum).